We begin with the raw amino-acid sequence, 350 residues long: 3-methylornithine synthase (350 aa).

The 223-residue stretch at 57 to 279 (NRVFLNCFIY…PKRLIPASLD (223 aa)) folds into the Radical SAM core domain. Residues C71 and C75 each contribute to the [4Fe-4S] cluster site. Position 77 (F77) interacts with S-adenosyl-L-methionine. Residue C78 participates in [4Fe-4S] cluster binding. (3R)-3-methyl-D-ornithine is bound by residues D112, S146, and Y169. 3 residues coordinate S-adenosyl-L-methionine: E171, R182, and R190. R235 contacts (3R)-3-methyl-D-ornithine. The S-adenosyl-L-methionine site is built by L240 and Q242. S277, T298, and S299 together coordinate (3R)-3-methyl-D-ornithine.

The protein belongs to the radical SAM superfamily. PylB family. It depends on [4Fe-4S] cluster as a cofactor. S-adenosyl-L-methionine serves as cofactor.

The catalysed reaction is L-lysine = (3R)-3-methyl-D-ornithine. It participates in amino-acid biosynthesis; L-pyrrolysine biosynthesis. Its function is as follows. Catalyzes the isomerization of L-lysine to (3R)-3-methyl-D-ornithine via a radical-based mechanism, a step in the biosynthesis pathway of pyrrolysine. Also catalyzes the reverse reaction in vitro, converting (3R)-3-methyl-D-ornithine into L-lysine. The protein is 3-methylornithine synthase of Methanosarcina barkeri (strain Fusaro / DSM 804).